We begin with the raw amino-acid sequence, 501 residues long: Endosomal/lysosomal proton channel TMEM175 (501 aa).

Residues Met-1–Leu-20 are disordered. At Met-1 to Ser-31 the chain is on the cytoplasmic side. A helical transmembrane segment spans residues His-32 to Ala-54. Positions Arg-33–Asp-39 match the RxxxFSD motif 1 motif. The Lumenal portion of the chain corresponds to His-55–Lys-75. The tract at residues Thr-56–Asp-61 is short helix H1-1. Residues Lys-63–Gln-69 form a short helix H2-1 region. Residues Ile-76–Gln-98 traverse the membrane as a helical segment. Topologically, residues Val-99–Asp-104 are cytoplasmic. Residues Asp-105–Ser-126 form a helical membrane-spanning segment. Topologically, residues Leu-127–Phe-136 are lumenal. A helical membrane pass occupies residues Gly-137 to Tyr-158. At Gly-159 to His-182 the chain is on the cytoplasmic side. Residues Ile-183–Phe-203 form a helical membrane-spanning segment. Topologically, residues Phe-204–Ser-208 are lumenal. The chain crosses the membrane as a helical span at residues Tyr-209 to Cys-228. The Cytoplasmic segment spans residues Lys-229–Ser-257. Residues Lys-258–Glu-282 form a helical membrane-spanning segment. The RxxxFSD motif 2 motif lies at Arg-260–Asp-266. The Lumenal portion of the chain corresponds to Asp-283 to Asn-309. A short helix H1-2 region spans residues Pro-288–His-296. The tract at residues Ser-298–Ser-304 is short helix H2-2. The helical transmembrane segment at Tyr-310–Leu-332 threads the bilayer. The Cytoplasmic segment spans residues Tyr-333–Thr-338. The chain crosses the membrane as a helical span at residues Arg-339–Gln-360. The Lumenal portion of the chain corresponds to Leu-361–Ala-375. The chain crosses the membrane as a helical span at residues Ile-376 to Thr-396. Residues Ala-397 to His-416 are Cytoplasmic-facing. A helical membrane pass occupies residues Ala-417–Leu-440. At Ser-441 to Glu-442 the chain is on the lumenal side. A helical membrane pass occupies residues Phe-443 to Ser-469. At Leu-470 to Ser-501 the chain is on the cytoplasmic side.

Belongs to the TMEM175 family. In terms of assembly, homodimer.

It localises to the endosome membrane. Its subcellular location is the lysosome membrane. The enzyme catalyses H(+)(in) = H(+)(out). It carries out the reaction K(+)(in) = K(+)(out). With respect to regulation, active at low pH (under pH 4.6): proton channel activity is activated by luminal side protons. Polyunsaturated fatty acids, such as arachidonic acid, also activate the channel activity. Its function is as follows. Proton-activated proton channel that catalyzes proton efflux from endosomes and lysosomes to maintain a steady-state pH. Activated at low pH (under pH 4.6) by luminal side protons: selectively mediates lysosomal proton release from lysosomes, eliciting a proton leak that balances V-ATPase activity to maintain pH homeostasis. Regulation of lumenal pH stability is required for autophagosome-lysosome fusion. Also acts as a potassium channel at higher pH, regulating potassium conductance in endosomes and lysosomes. The polypeptide is Endosomal/lysosomal proton channel TMEM175 (Gallus gallus (Chicken)).